The chain runs to 196 residues: Peptidyl-tRNA hydrolase (196 aa).

TRNA is bound at residue Tyr-18. The Proton acceptor role is filled by His-23. TRNA contacts are provided by Phe-69, Asn-71, and Asn-117.

It belongs to the PTH family. In terms of assembly, monomer.

It localises to the cytoplasm. It catalyses the reaction an N-acyl-L-alpha-aminoacyl-tRNA + H2O = an N-acyl-L-amino acid + a tRNA + H(+). Its function is as follows. Hydrolyzes ribosome-free peptidyl-tRNAs (with 1 or more amino acids incorporated), which drop off the ribosome during protein synthesis, or as a result of ribosome stalling. Functionally, catalyzes the release of premature peptidyl moieties from peptidyl-tRNA molecules trapped in stalled 50S ribosomal subunits, and thus maintains levels of free tRNAs and 50S ribosomes. The polypeptide is Peptidyl-tRNA hydrolase (Vibrio cholerae serotype O1 (strain ATCC 39315 / El Tor Inaba N16961)).